A 679-amino-acid chain; its full sequence is Glycine--tRNA ligase beta subunit (679 aa).

Belongs to the class-II aminoacyl-tRNA synthetase family. As to quaternary structure, tetramer of two alpha and two beta subunits.

The protein localises to the cytoplasm. The enzyme catalyses tRNA(Gly) + glycine + ATP = glycyl-tRNA(Gly) + AMP + diphosphate. This is Glycine--tRNA ligase beta subunit from Streptococcus agalactiae serotype Ia (strain ATCC 27591 / A909 / CDC SS700).